Reading from the N-terminus, the 517-residue chain is Glutamyl-tRNA(Gln) amidotransferase subunit A, mitochondrial (517 aa).

Residues Lys-58 and Ser-131 each act as charge relay system in the active site. The segment at 106-132 (FGMGTHSTHSAHGPVASPAGRSAGGSS) is disordered. Ser-155 serves as the catalytic Acyl-ester intermediate.

This sequence belongs to the amidase family. GatA subfamily. Subunit of the heterotrimeric GatCAB amidotransferase (AdT) complex, composed of A, B and C subunits.

It localises to the mitochondrion. The enzyme catalyses L-glutamyl-tRNA(Gln) + L-glutamine + ATP + H2O = L-glutaminyl-tRNA(Gln) + L-glutamate + ADP + phosphate + H(+). Functionally, allows the formation of correctly charged Gln-tRNA(Gln) through the transamidation of misacylated Glu-tRNA(Gln) in the mitochondria. The reaction takes place in the presence of glutamine and ATP through an activated gamma-phospho-Glu-tRNA(Gln). This is Glutamyl-tRNA(Gln) amidotransferase subunit A, mitochondrial from Pyricularia oryzae (strain 70-15 / ATCC MYA-4617 / FGSC 8958) (Rice blast fungus).